Reading from the N-terminus, the 61-residue chain is MAKRISVKLVKSTIGQKQPVCSTIRSLGLKKLNSTVEHDANPAVLGMVKRVAHLVEVKELN.

It belongs to the universal ribosomal protein uL30 family. Part of the 50S ribosomal subunit.

The polypeptide is Large ribosomal subunit protein uL30 (Treponema denticola (strain ATCC 35405 / DSM 14222 / CIP 103919 / JCM 8153 / KCTC 15104)).